The chain runs to 1315 residues: ESX secretion system protein EccC (1315 aa).

The span at 1 to 11 (MSTVLVRRKER) shows a compositional bias: basic residues. The disordered stretch occupies residues 1–21 (MSTVLVRRKERRQPPQMPRGE). Residues 1-40 (MSTVLVRRKERRQPPQMPRGEILLESPPELPEVVTNSFQN) lie on the Cytoplasmic side of the membrane. The chain crosses the membrane as a helical span at residues 41–61 (VLMYLPMAAGSAAMVFTFLNH). At 62 to 64 (RNT) the chain is on the extracellular side. The helical transmembrane segment at 65 to 85 (LQLVAGGMFALSMFGMMFGQL) threads the bilayer. Topologically, residues 86 to 1315 (SQQSGERKTK…RLIQTAYRES (1230 aa)) are cytoplasmic. FtsK domains are found at residues 456–656 (GRPL…MESR) and 813–1004 (RDPY…YESE). 479–486 (GATGSGKS) lines the ATP pocket. The active site involves Glu-593. The segment at 721–1315 (RPQVVEQPQP…RLIQTAYRES (595 aa)) is binds EsxB. ATP is bound by residues 834 to 839 (QTGKST), Thr-1031, 1119 to 1124 (ECGKSN), Gln-1293, and 1310 to 1311 (TA). Positions 1099-1282 (LSPVYLDFNT…MSGNKDEGIL (184 aa)) constitute a FtsK 3 domain.

The cytosolic domain can form homodimers. Binds EsxB, which leads to multimerization, however EsxA disassembles the multimers, possibly by making EccC-EsxA-EsxB trimers instead of EccC-EsxB-EsxB-EccC tetramers. Forms a complex with EsxA and EsxB, probably wholly mediated by EsxB.

It localises to the cell membrane. EsxB binding to the third FtsK domain causes multimerization; a subsequent unknown step relieves the allosteric inhibition of linker 2 on FtsK domain 1, activating the ATPase activity; a mutant EsxB ('Ala-98') does not cause multimers to form. In terms of biological role, part of the ESX specialized secretion system, which exports proteins from the cell including EsxA (ESAT-6) and EsxB (CFP-10). Has weak intrinsic ATPase activity; probably only the first FtsK domain can hydrolyze ATP. Might be the translocase subunit. The chain is ESX secretion system protein EccC from Thermomonospora curvata (strain ATCC 19995 / DSM 43183 / JCM 3096 / KCTC 9072 / NBRC 15933 / NCIMB 10081 / Henssen B9).